The chain runs to 204 residues: Thymidylate kinase (204 aa).

9 to 16 is an ATP binding site; sequence GIEASGKT.

It belongs to the thymidylate kinase family.

The catalysed reaction is dTMP + ATP = dTDP + ADP. In terms of biological role, phosphorylation of dTMP to form dTDP in both de novo and salvage pathways of dTTP synthesis. The protein is Thymidylate kinase of Sulfurihydrogenibium sp. (strain YO3AOP1).